The following is a 466-amino-acid chain: CBL-interacting protein kinase 20 (466 aa).

The Protein kinase domain occupies 12–276 (YELGRSLGHG…IDELVKHPWF (265 aa)). ATP-binding positions include 18–26 (LGHGTFSKV) and Lys41. Asp139 serves as the catalytic Proton acceptor. Positions 162–191 (DFGLSALSASRRHDGLLHTTCGTPSYVAPE) are activation loop. The NAF domain maps to 297–329 (KPANAAMNMKPASLNAFDIISLSQGFDLSGMFC). The interval 337 to 366 (TQDQLFVTGKPATAIVSRLEEIAETEHFTV) is PPI. The interval 446-466 (ASEKNQLPAVSEVSPLSSPRN) is disordered.

The protein belongs to the protein kinase superfamily. CAMK Ser/Thr protein kinase family. SNF1 subfamily. Mn(2+) is required as a cofactor.

The enzyme catalyses L-seryl-[protein] + ATP = O-phospho-L-seryl-[protein] + ADP + H(+). It catalyses the reaction L-threonyl-[protein] + ATP = O-phospho-L-threonyl-[protein] + ADP + H(+). Functionally, CIPK serine-threonine protein kinases interact with CBL proteins. Binding of a CBL protein to the regulatory NAF domain of CIPK protein lead to the activation of the kinase in a calcium-dependent manner. The protein is CBL-interacting protein kinase 20 (CIPK20) of Oryza sativa subsp. japonica (Rice).